Reading from the N-terminus, the 469-residue chain is MASMVLADGMPTVKDDSTRSRGSDVDSFTSTDNVTQINVEAAISENKNEEKPIQDNSEQEFNPHVSIIQRQLNGYVGFASLPNQWHRRCVRQGFNFNVLVLGESGSGKSTLVNTLLNRDVYPPTQKSLTGDFGVNPEPTVMINSSAVEIVENGISLQLNVIDTPGFGDFIDNTDCWQPVLTDIEGRYDQYLELEKHNPRSTIQDPRVHACIFFIQPTGHAISAMELRVMLALHEKVNIIPIIAKADTLTDDELNFTKEMILRDIQYHNIRIFFPPTYETDDPESVAENADIMSRIPFAIIASNTFVVNNEGKRVRGRRYPWGVVEVDNEEHSDFPKLREMLIRTHLEELKEQTNKLYEAYRTERLLSSGISQDHSVFREVNPSAKLEEERALHEEKLMKMEAEMKTIFSQKVQEKEDRLKQSENELRTRHREMKAALEKQKADLIDHKNRLMQAKAAAENEKSKRKFFK.

Residues Met1–Glu58 form a disordered region. A compositionally biased stretch (basic and acidic residues) spans Val13–Asp24. Over residues Asp26–Asn38 the composition is skewed to polar residues. Residues Gln92–Ser367 enclose the Septin-type G domain. The interval Gly102–Ser109 is G1 motif. GTP contacts are provided by residues Gly102–Ser109, Thr139, Gly165, Lys244–Glu252, and Arg317. The interval Asp162–Gly165 is G3 motif. A G4 motif region spans residues Ala243–Asp246. A coiled-coil region spans residues Ser383–Lys469.

The protein belongs to the TRAFAC class TrmE-Era-EngA-EngB-Septin-like GTPase superfamily. Septin GTPase family. Component of the septin complex composed of two copies of each spn1, spn2, spn3 and spn4.

Its subcellular location is the cytoplasm. The protein localises to the cell cortex. Plays a role in the cell cycle. Involved in a late stage of septum formation leading to the separation of the daughter cells. In Schizosaccharomyces pombe (strain 972 / ATCC 24843) (Fission yeast), this protein is Septin homolog spn1 (spn1).